Here is a 251-residue protein sequence, read N- to C-terminus: Ubiquinone/menaquinone biosynthesis C-methyltransferase UbiE (251 aa).

Residues Thr74, Asp95, and 123–124 (NA) each bind S-adenosyl-L-methionine.

Belongs to the class I-like SAM-binding methyltransferase superfamily. MenG/UbiE family.

It carries out the reaction a 2-demethylmenaquinol + S-adenosyl-L-methionine = a menaquinol + S-adenosyl-L-homocysteine + H(+). The catalysed reaction is a 2-methoxy-6-(all-trans-polyprenyl)benzene-1,4-diol + S-adenosyl-L-methionine = a 5-methoxy-2-methyl-3-(all-trans-polyprenyl)benzene-1,4-diol + S-adenosyl-L-homocysteine + H(+). It participates in quinol/quinone metabolism; menaquinone biosynthesis; menaquinol from 1,4-dihydroxy-2-naphthoate: step 2/2. It functions in the pathway cofactor biosynthesis; ubiquinone biosynthesis. In terms of biological role, methyltransferase required for the conversion of demethylmenaquinol (DMKH2) to menaquinol (MKH2) and the conversion of 2-polyprenyl-6-methoxy-1,4-benzoquinol (DDMQH2) to 2-polyprenyl-3-methyl-6-methoxy-1,4-benzoquinol (DMQH2). This is Ubiquinone/menaquinone biosynthesis C-methyltransferase UbiE from Shewanella putrefaciens (strain CN-32 / ATCC BAA-453).